The primary structure comprises 78 residues: Small ribosomal subunit protein bS18 (78 aa).

This sequence belongs to the bacterial ribosomal protein bS18 family. In terms of assembly, part of the 30S ribosomal subunit. Forms a tight heterodimer with protein bS6.

In terms of biological role, binds as a heterodimer with protein bS6 to the central domain of the 16S rRNA, where it helps stabilize the platform of the 30S subunit. This is Small ribosomal subunit protein bS18 from Ligilactobacillus salivarius (strain UCC118) (Lactobacillus salivarius).